Consider the following 217-residue polypeptide: 7-cyano-7-deazaguanine synthase (217 aa).

An ATP-binding site is contributed by 10–20; that stretch reads FSGGQDSTTCL. 4 residues coordinate Zn(2+): cysteine 185, cysteine 194, cysteine 197, and cysteine 200.

Belongs to the QueC family. In terms of assembly, homodimer. The cofactor is Zn(2+).

It carries out the reaction 7-carboxy-7-deazaguanine + NH4(+) + ATP = 7-cyano-7-deazaguanine + ADP + phosphate + H2O + H(+). The protein operates within purine metabolism; 7-cyano-7-deazaguanine biosynthesis. Its function is as follows. Catalyzes the ATP-dependent conversion of 7-carboxy-7-deazaguanine (CDG) to 7-cyano-7-deazaguanine (preQ(0)). The sequence is that of 7-cyano-7-deazaguanine synthase from Streptococcus mutans serotype c (strain ATCC 700610 / UA159).